A 95-amino-acid polypeptide reads, in one-letter code: Citrate lyase acyl carrier protein (95 aa).

At Ser-14 the chain carries O-(phosphoribosyl dephospho-coenzyme A)serine.

Belongs to the CitD family. In terms of assembly, oligomer with a subunit composition of (alpha,beta,gamma)6.

It localises to the cytoplasm. Covalent carrier of the coenzyme of citrate lyase. The sequence is that of Citrate lyase acyl carrier protein from Haemophilus influenzae (strain PittGG).